We begin with the raw amino-acid sequence, 190 residues long: Lipid A acyltransferase PagP (190 aa).

Positions 1–18 (MKRLISCLTIICALNASA) are cleaved as a signal peptide. Active-site residues include histidine 60, aspartate 103, and serine 104.

This sequence belongs to the lipid A palmitoyltransferase family. Homodimer.

The protein resides in the cell outer membrane. The enzyme catalyses a lipid A + a 1,2-diacyl-sn-glycero-3-phosphocholine = a hepta-acyl lipid A + a 2-acyl-sn-glycero-3-phosphocholine. The catalysed reaction is a lipid IVA + a 1,2-diacyl-sn-glycero-3-phosphocholine = a lipid IVB + a 2-acyl-sn-glycero-3-phosphocholine. It catalyses the reaction a lipid IIA + a 1,2-diacyl-sn-glycero-3-phosphocholine = a lipid IIB + a 2-acyl-sn-glycero-3-phosphocholine. Functionally, transfers a fatty acid residue from the sn-1 position of a phospholipid to the N-linked hydroxyfatty acid chain on the proximal unit of lipid A or its precursors. This chain is Lipid A acyltransferase PagP, found in Legionella pneumophila subsp. pneumophila (strain Philadelphia 1 / ATCC 33152 / DSM 7513).